We begin with the raw amino-acid sequence, 172 residues long: MLPMITGFMNYGQQTLRAARYIGQGFMITLSHTNRLPVTIQYPYEKLITSERFRGRIHFEFDKCIACEVCVRVCPIDLPVVDWKLETNIRKKRLLNYSIDFGICIFCGNCVEYCPTNCLSMTEEYEFSTYDRHELNYNQIALGRLPMSVIDDYTIRTIWNSPQTKNGVNPLI.

4Fe-4S ferredoxin-type domains lie at 55 to 84 (GRIHFEFDKCIACEVCVRVCPIDLPVVDWK) and 95 to 124 (LNYSIDFGICIFCGNCVEYCPTNCLSMTEE). [4Fe-4S] cluster-binding residues include Cys64, Cys67, Cys70, Cys74, Cys104, Cys107, Cys110, and Cys114.

It belongs to the complex I 23 kDa subunit family. In terms of assembly, NDH is composed of at least 16 different subunits, 5 of which are encoded in the nucleus. The cofactor is [4Fe-4S] cluster.

Its subcellular location is the plastid. It localises to the chloroplast thylakoid membrane. The enzyme catalyses a plastoquinone + NADH + (n+1) H(+)(in) = a plastoquinol + NAD(+) + n H(+)(out). It carries out the reaction a plastoquinone + NADPH + (n+1) H(+)(in) = a plastoquinol + NADP(+) + n H(+)(out). Its function is as follows. NDH shuttles electrons from NAD(P)H:plastoquinone, via FMN and iron-sulfur (Fe-S) centers, to quinones in the photosynthetic chain and possibly in a chloroplast respiratory chain. The immediate electron acceptor for the enzyme in this species is believed to be plastoquinone. Couples the redox reaction to proton translocation, and thus conserves the redox energy in a proton gradient. This chain is NAD(P)H-quinone oxidoreductase subunit I, chloroplastic, found in Arabidopsis thaliana (Mouse-ear cress).